The following is a 339-amino-acid chain: DNA-directed RNA polymerase subunit alpha (339 aa).

Residues M1 to E233 are alpha N-terminal domain (alpha-NTD). An alpha C-terminal domain (alpha-CTD) region spans residues K267–K339.

This sequence belongs to the RNA polymerase alpha chain family. In plastids the minimal PEP RNA polymerase catalytic core is composed of four subunits: alpha, beta, beta', and beta''. When a (nuclear-encoded) sigma factor is associated with the core the holoenzyme is formed, which can initiate transcription.

The protein resides in the plastid. It localises to the chloroplast. The catalysed reaction is RNA(n) + a ribonucleoside 5'-triphosphate = RNA(n+1) + diphosphate. Functionally, DNA-dependent RNA polymerase catalyzes the transcription of DNA into RNA using the four ribonucleoside triphosphates as substrates. In Piper cenocladum (Ant piper), this protein is DNA-directed RNA polymerase subunit alpha.